The following is a 667-amino-acid chain: DNA ligase (667 aa).

Residues 34–38 (DSEYD), 83–84 (SL), and glutamate 112 contribute to the NAD(+) site. Lysine 114 acts as the N6-AMP-lysine intermediate in catalysis. NAD(+) contacts are provided by arginine 135, glutamate 169, lysine 285, and lysine 309. Cysteine 403, cysteine 406, cysteine 421, and cysteine 426 together coordinate Zn(2+). The BRCT domain maps to 589 to 667 (ASDSYFAGKT…EARLISELKK (79 aa)).

The protein belongs to the NAD-dependent DNA ligase family. LigA subfamily. Requires Mg(2+) as cofactor. Mn(2+) is required as a cofactor.

It catalyses the reaction NAD(+) + (deoxyribonucleotide)n-3'-hydroxyl + 5'-phospho-(deoxyribonucleotide)m = (deoxyribonucleotide)n+m + AMP + beta-nicotinamide D-nucleotide.. DNA ligase that catalyzes the formation of phosphodiester linkages between 5'-phosphoryl and 3'-hydroxyl groups in double-stranded DNA using NAD as a coenzyme and as the energy source for the reaction. It is essential for DNA replication and repair of damaged DNA. The sequence is that of DNA ligase from Bacillus licheniformis (strain ATCC 14580 / DSM 13 / JCM 2505 / CCUG 7422 / NBRC 12200 / NCIMB 9375 / NCTC 10341 / NRRL NRS-1264 / Gibson 46).